A 510-amino-acid chain; its full sequence is Histidine ammonia-lyase (510 aa).

The segment at residues 143–145 (ASG) is a cross-link (5-imidazolinone (Ala-Gly)). 2,3-didehydroalanine (Ser) is present on S144.

It belongs to the PAL/histidase family. Post-translationally, contains an active site 4-methylidene-imidazol-5-one (MIO), which is formed autocatalytically by cyclization and dehydration of residues Ala-Ser-Gly.

Its subcellular location is the cytoplasm. It catalyses the reaction L-histidine = trans-urocanate + NH4(+). It functions in the pathway amino-acid degradation; L-histidine degradation into L-glutamate; N-formimidoyl-L-glutamate from L-histidine: step 1/3. This is Histidine ammonia-lyase from Pseudomonas putida (strain ATCC 47054 / DSM 6125 / CFBP 8728 / NCIMB 11950 / KT2440).